We begin with the raw amino-acid sequence, 317 residues long: COP9 signalosome complex subunit 6a (317 aa).

The 135-residue stretch at 30 to 164 folds into the MPN domain; it reads TQLNPPASIC…VTIYESELHV (135 aa).

This sequence belongs to the peptidase M67A family. CSN6 subfamily. Component of the CSN complex, probably composed of CSN1, CSN2, CSN3, CSN4, CSN5 (CSN5A or CSN5B), CSN6 (CSN6A or CSN6B), CSN7 and CSN8. Interacts with itself. In the complex, it probably interacts directly with CSN4 and CSN5A or CSN5B. Interacts with CSN7 (via C-terminal tail). Binds to the translation initiation factors TIF3E1.

Its subcellular location is the cytoplasm. It is found in the nucleus. In terms of biological role, component of the COP9 signalosome complex (CSN), a complex involved in various cellular and developmental processes such as photomorphogenesis and auxin and jasmonate responses. The CSN complex is an essential regulator of the ubiquitin (Ubl) conjugation pathway by mediating the deneddylation of the cullin subunits of SCF-type E3 ligase complexes, leading to decrease the Ubl ligase activity of SCF. It is involved in repression of photomorphogenesis in darkness by regulating the activity of COP1-containing Ubl ligase complexes. The complex is also required for degradation of PSIAA6 by regulating the activity of the Ubl ligase SCF-TIR complex. Essential for the structural integrity of the CSN holocomplex. The sequence is that of COP9 signalosome complex subunit 6a from Arabidopsis thaliana (Mouse-ear cress).